Reading from the N-terminus, the 173-residue chain is MTRILGIDPGSQRTGVGVIDVDEYGCSRHVYHAPLVLLGQSSFAGRLKQLLLGLSAVIEEYSPKEVAIEKVFMSKNADSALKLGQARGVAISAVVLRDLPVHEYAARQIKLAVVGRGGADKQQIQHMVGVMLNLQGRLQSDAADALAVAITHAHVSATAQRLGVSTKQAWSRK.

Residues Asp-8, Glu-69, and Asp-141 contribute to the active site. Mg(2+)-binding residues include Asp-8, Glu-69, and Asp-141.

It belongs to the RuvC family. As to quaternary structure, homodimer which binds Holliday junction (HJ) DNA. The HJ becomes 2-fold symmetrical on binding to RuvC with unstacked arms; it has a different conformation from HJ DNA in complex with RuvA. In the full resolvosome a probable DNA-RuvA(4)-RuvB(12)-RuvC(2) complex forms which resolves the HJ. Mg(2+) is required as a cofactor.

Its subcellular location is the cytoplasm. It carries out the reaction Endonucleolytic cleavage at a junction such as a reciprocal single-stranded crossover between two homologous DNA duplexes (Holliday junction).. The RuvA-RuvB-RuvC complex processes Holliday junction (HJ) DNA during genetic recombination and DNA repair. Endonuclease that resolves HJ intermediates. Cleaves cruciform DNA by making single-stranded nicks across the HJ at symmetrical positions within the homologous arms, yielding a 5'-phosphate and a 3'-hydroxyl group; requires a central core of homology in the junction. The consensus cleavage sequence is 5'-(A/T)TT(C/G)-3'. Cleavage occurs on the 3'-side of the TT dinucleotide at the point of strand exchange. HJ branch migration catalyzed by RuvA-RuvB allows RuvC to scan DNA until it finds its consensus sequence, where it cleaves and resolves the cruciform DNA. The polypeptide is Crossover junction endodeoxyribonuclease RuvC (Xylella fastidiosa (strain 9a5c)).